The following is a 259-amino-acid chain: MSYKVIIPARYGASRLPGKPLLDLAGKPMLLHVVEKAQKSGAEEVLVATDDRRIEAIVQNHGVQVCMTSVQHDSGTNRLAEAVTQKDYPDQTIIINVQGDEPLLPPSLITQAAEDLKTHPKADIATLCVPIANREELFDPNIVKVVRDIQGYALYFSRAPIPWAREDFAAKTGNRWPTSWSYYRHVGLYAYRASFLRRYPQLPVSPLEQAECLEQLRVLYHGGRIHVAIAGTIPPPGVDTLADLERVRQLLVTQERNHN.

It belongs to the KdsB family.

It localises to the cytoplasm. It catalyses the reaction 3-deoxy-alpha-D-manno-oct-2-ulosonate + CTP = CMP-3-deoxy-beta-D-manno-octulosonate + diphosphate. It functions in the pathway nucleotide-sugar biosynthesis; CMP-3-deoxy-D-manno-octulosonate biosynthesis; CMP-3-deoxy-D-manno-octulosonate from 3-deoxy-D-manno-octulosonate and CTP: step 1/1. Its pathway is bacterial outer membrane biogenesis; lipopolysaccharide biosynthesis. Activates KDO (a required 8-carbon sugar) for incorporation into bacterial lipopolysaccharide in Gram-negative bacteria. This chain is 3-deoxy-manno-octulosonate cytidylyltransferase, found in Nitrosococcus oceani (strain ATCC 19707 / BCRC 17464 / JCM 30415 / NCIMB 11848 / C-107).